We begin with the raw amino-acid sequence, 260 residues long: Hydroxyacylglutathione hydrolase (260 aa).

His-61, His-63, Asp-65, His-66, His-119, Asp-138, and His-176 together coordinate Zn(2+).

Belongs to the metallo-beta-lactamase superfamily. Glyoxalase II family. Monomer. Zn(2+) serves as cofactor.

The catalysed reaction is an S-(2-hydroxyacyl)glutathione + H2O = a 2-hydroxy carboxylate + glutathione + H(+). The protein operates within secondary metabolite metabolism; methylglyoxal degradation; (R)-lactate from methylglyoxal: step 2/2. Thiolesterase that catalyzes the hydrolysis of S-D-lactoyl-glutathione to form glutathione and D-lactic acid. In Brucella suis (strain ATCC 23445 / NCTC 10510), this protein is Hydroxyacylglutathione hydrolase.